The sequence spans 534 residues: Pentatricopeptide repeat-containing protein At5g59600 (534 aa).

PPR repeat units follow at residues 50-80 (LTRI…MPKR), 81-115 (DISG…GLKL), 116-150 (DAFI…SYES), 151-181 (DAFI…LGEQ), 182-216 (DLVV…GIKP), 217-251 (DVIT…GYKP), 252-286 (DVVS…GLYP), 287-321 (NSAT…GLED), 322-352 (HGFV…TPKK), 353-387 (TTVT…GEKL), 388-418 (DHLT…MQNK), and 424-454 (RLEH…MRME). A type E motif region spans residues 459-534 (VWGALLAACR…FLGSSWVETV (76 aa)).

Belongs to the PPR family. PCMP-E subfamily.

The sequence is that of Pentatricopeptide repeat-containing protein At5g59600 (PCMP-E1) from Arabidopsis thaliana (Mouse-ear cress).